Here is a 171-residue protein sequence, read N- to C-terminus: 3-hydroxydecanoyl-[acyl-carrier-protein] dehydratase (171 aa).

His70 is a catalytic residue.

It belongs to the thioester dehydratase family. FabA subfamily. In terms of assembly, homodimer.

It localises to the cytoplasm. It catalyses the reaction a (3R)-hydroxyacyl-[ACP] = a (2E)-enoyl-[ACP] + H2O. The enzyme catalyses (3R)-hydroxydecanoyl-[ACP] = (2E)-decenoyl-[ACP] + H2O. It carries out the reaction (2E)-decenoyl-[ACP] = (3Z)-decenoyl-[ACP]. It participates in lipid metabolism; fatty acid biosynthesis. Necessary for the introduction of cis unsaturation into fatty acids. Catalyzes the dehydration of (3R)-3-hydroxydecanoyl-ACP to E-(2)-decenoyl-ACP and then its isomerization to Z-(3)-decenoyl-ACP. Can catalyze the dehydratase reaction for beta-hydroxyacyl-ACPs with saturated chain lengths up to 16:0, being most active on intermediate chain length. The chain is 3-hydroxydecanoyl-[acyl-carrier-protein] dehydratase from Nitrosococcus oceani (strain ATCC 19707 / BCRC 17464 / JCM 30415 / NCIMB 11848 / C-107).